The chain runs to 307 residues: Bifunctional protein FolD 3 (307 aa).

Residues Gly-169 to Ser-171, Ser-194, and Ile-235 each bind NADP(+).

The protein belongs to the tetrahydrofolate dehydrogenase/cyclohydrolase family. As to quaternary structure, homodimer.

The catalysed reaction is (6R)-5,10-methylene-5,6,7,8-tetrahydrofolate + NADP(+) = (6R)-5,10-methenyltetrahydrofolate + NADPH. It carries out the reaction (6R)-5,10-methenyltetrahydrofolate + H2O = (6R)-10-formyltetrahydrofolate + H(+). It functions in the pathway one-carbon metabolism; tetrahydrofolate interconversion. In terms of biological role, catalyzes the oxidation of 5,10-methylenetetrahydrofolate to 5,10-methenyltetrahydrofolate and then the hydrolysis of 5,10-methenyltetrahydrofolate to 10-formyltetrahydrofolate. In Ectopseudomonas mendocina (strain ymp) (Pseudomonas mendocina), this protein is Bifunctional protein FolD 3.